A 597-amino-acid chain; its full sequence is DNA import protein CedB (597 aa).

A helical transmembrane segment spans residues 10–30 (VVLLILGIISFNLVFIILAII). Residue 286 to 293 (GPTGSGKT) participates in ATP binding.

The protein localises to the cell membrane. Its function is as follows. Part of the Ced system, which is involved in DNA import. The protein is DNA import protein CedB of Sulfolobus acidocaldarius (strain ATCC 33909 / DSM 639 / JCM 8929 / NBRC 15157 / NCIMB 11770).